Reading from the N-terminus, the 148-residue chain is UPF0178 protein lpl0088 (148 aa).

This sequence belongs to the UPF0178 family.

This chain is UPF0178 protein lpl0088, found in Legionella pneumophila (strain Lens).